The sequence spans 96 residues: RNA-binding protein Hfq (96 aa).

A Sm domain is found at 9–68 (DPFLNALRRERVPVSIYLVNGIKLQGQIESFDQFVILLKNTVSQMVYKHAISTVVPSRPV). Residues 64-96 (PSRPVSHHSNTGTNQAGTNYSGGNATQQDDVAE) form a disordered region. Residues 70-96 (HHSNTGTNQAGTNYSGGNATQQDDVAE) show a composition bias toward polar residues.

It belongs to the Hfq family. As to quaternary structure, homohexamer.

Its function is as follows. RNA chaperone that binds small regulatory RNA (sRNAs) and mRNAs to facilitate mRNA translational regulation in response to envelope stress, environmental stress and changes in metabolite concentrations. Also binds with high specificity to tRNAs. The sequence is that of RNA-binding protein Hfq from Proteus mirabilis (strain HI4320).